The primary structure comprises 584 residues: Membrane frizzled-related protein (584 aa).

At 1–69 (MKDYDDVILR…QPDCHFSWFC (69 aa)) the chain is on the cytoplasmic side. Residues 70 to 90 (ILLLSGLLLLLLGLLVAVILA) traverse the membrane as a helical; Signal-anchor for type II membrane protein segment. Residues 91–584 (QLQATSLPRT…AASLEACSQP (494 aa)) lie on the Extracellular side of the membrane. The tract at residues 108 to 140 (RGLTPMGVIPSTTPNTTTTTTTTTPARTGQQEA) is disordered. The segment covering 119–132 (TTPNTTTTTTTTTP) has biased composition (low complexity). Intrachain disulfides connect C150–C176 and C203–C222. The CUB 1 domain maps to 150 to 259 (CGGLLPGPSG…SGFQAWYQAV (110 aa)). N233 carries an N-linked (GlcNAc...) asparagine glycan. The LDL-receptor class A 1 domain occupies 265-301 (SCAHNEFHCDLLLCLKRDSVCDGITECADGSDEANCS). 5 cysteine pairs are disulfide-bonded: C266/C278, C273/C291, C285/C300, C307/C333, and C360/C383. One can recognise a CUB 2 domain in the interval 307–420 (CGGNLTGLYG…GGFLATYQAI (114 aa)). N421 carries an N-linked (GlcNAc...) asparagine glycan. In terms of domain architecture, LDL-receptor class A 2 spans 426–460 (GCPWAEFCQSGGYRDLQWMCDLWKDCANDSNDNCS). Disulfide bonds link C433–C451, C445–C459, C471–C533, C479–C526, C517–C554, C543–C581, and C547–C569. N-linked (GlcNAc...) asparagine glycosylation occurs at N458. Residues 466–584 (QPDLTCEPVQ…AASLEACSQP (119 aa)) form the FZ domain.

Interacts with C1QTNF5. Expressed in retinal pigment epithelium and ciliary epithelium of the eye.

The protein localises to the apical cell membrane. Its function is as follows. May play a role in eye development. The protein is Membrane frizzled-related protein (Mfrp) of Mus musculus (Mouse).